Consider the following 64-residue polypeptide: Prokaryotic ubiquitin-like protein Pup (64 aa).

The segment at 1–37 is disordered; that stretch reads MAQEQTKRGGGGGEDDDLTGSTAAGQERREKLTDETD. The tract at residues 21 to 58 is ARC ATPase binding; it reads STAAGQERREKLTDETDDLLDEIDDVLEENAEDFVRAY. The stretch at 23 to 52 forms a coiled coil; the sequence is AAGQERREKLTDETDDLLDEIDDVLEENAE. Glutamine 64 is modified (deamidated glutamine). An Isoglutamyl lysine isopeptide (Gln-Lys) (interchain with K-? in acceptor proteins) cross-link involves residue glutamine 64.

It belongs to the prokaryotic ubiquitin-like protein family. As to quaternary structure, strongly interacts with the proteasome-associated ATPase ARC through a hydrophobic interface; the interacting region of Pup lies in its C-terminal half. There is one Pup binding site per ARC hexamer ring. Post-translationally, is modified by deamidation of its C-terminal glutamine to glutamate by the deamidase Dop, a prerequisite to the subsequent pupylation process.

It functions in the pathway protein degradation; proteasomal Pup-dependent pathway. In terms of biological role, protein modifier that is covalently attached to lysine residues of substrate proteins, thereby targeting them for proteasomal degradation. The tagging system is termed pupylation. The polypeptide is Prokaryotic ubiquitin-like protein Pup (Mycolicibacterium vanbaalenii (strain DSM 7251 / JCM 13017 / BCRC 16820 / KCTC 9966 / NRRL B-24157 / PYR-1) (Mycobacterium vanbaalenii)).